The following is a 261-amino-acid chain: MSRTSSQNQEIINNKHRLKTSKSSKPSKSSKPSKSSKPSKSSKTSKSSRSSGSKSSRSKTGKTSSRKDKYKEEYSQDQYPDEQEYEQEYEQEYEQEYQDNGEQTEEFVENNQDAYPEDIENDERQTQSNKELDTINKKTKERLKNKINKWMDHDDNIKRLNAKMKAFKDAKKQEEESIIKLIDKFEIGESKMDIRDDNKNLRGRVYKHKSVTKGAIKEDIIRDALMEVVRNERKVAELVKKIESKRPINERYYLKRTKGNN.

Polar residues predominate over residues 1 to 12; sequence MSRTSSQNQEII. The tract at residues 1–139 is disordered; sequence MSRTSSQNQE…KELDTINKKT (139 aa). Low complexity predominate over residues 23–55; sequence SSKPSKSSKPSKSSKPSKSSKTSKSSRSSGSKS. Positions 65–74 are enriched in basic and acidic residues; the sequence is SRKDKYKEEY. Positions 79–108 are enriched in acidic residues; it reads YPDEQEYEQEYEQEYEQEYQDNGEQTEEFV. A compositionally biased stretch (basic and acidic residues) spans 122–139; it reads DERQTQSNKELDTINKKT. Coiled-coil stretches lie at residues 151 to 181 and 218 to 243; these read MDHD…IIKL and EDII…KKIE.

This is an uncharacterized protein from Acanthamoeba polyphaga (Amoeba).